A 793-amino-acid polypeptide reads, in one-letter code: Phenylalanine--tRNA ligase beta subunit (793 aa).

Residues 39-148 (AKPFTGVVVG…EDAPVGLNIR (110 aa)) enclose the tRNA-binding domain. Residues 400 to 476 (PKREAIELNQ…RIHGYDNIQI (77 aa)) enclose the B5 domain. Residues Asp454, Asp460, Glu463, and Glu464 each contribute to the Mg(2+) site. An FDX-ACB domain is found at 698–791 (SRFPSVRRDI…LENTYQATLR (94 aa)).

Belongs to the phenylalanyl-tRNA synthetase beta subunit family. Type 1 subfamily. Tetramer of two alpha and two beta subunits. Requires Mg(2+) as cofactor.

Its subcellular location is the cytoplasm. The enzyme catalyses tRNA(Phe) + L-phenylalanine + ATP = L-phenylalanyl-tRNA(Phe) + AMP + diphosphate + H(+). In Acinetobacter baylyi (strain ATCC 33305 / BD413 / ADP1), this protein is Phenylalanine--tRNA ligase beta subunit.